The following is a 550-amino-acid chain: Membrane protein of ER body 2 (550 aa).

The disordered stretch occupies residues 46-199 (EFRSKAAATA…SSDSEEKSNL (154 aa)). Low complexity-rich tracts occupy residues 80–105 (SVSESTSSLFSDSDPIVLESTVSETG) and 112–121 (TGSNEENGNN). Residues 122–132 (WLESSSTNLPN) show a composition bias toward polar residues. A coiled-coil region spans residues 134 to 165 (ENKRQRNGEDCEIEEEEENNERSLSDSEEKSN). The span at 143-152 (DCEIEEEEEN) shows a compositional bias: acidic residues. Composition is skewed to basic and acidic residues over residues 153–166 (NERSLSDSEEKSNL) and 185–198 (KNERSSSDSEEKSN). Helical transmembrane passes span 374–394 (STMNILALAVANLAGGLIVLA), 425–445 (ILVAVMSYIFFGLIPPLVYAF), 458–478 (ISVFLGSLVCVILLGSIKVYV), and 500–520 (SIVVASCGISYVVGDIMGEYI). The stretch at 393–418 (LAQNFQDLRNSSDQEKDRYEELLGRR) forms a coiled coil.

Belongs to the CCC1 family. In terms of assembly, interacts directly or indirectly with NAI2.

The protein resides in the endoplasmic reticulum membrane. May sequester excess cytosolic iron and manganese into endoplasmic reticulum to reduce metal ion toxicity. Not essential for the accumulation of ER body components, including PYK10. The protein is Membrane protein of ER body 2 (MEB2) of Arabidopsis thaliana (Mouse-ear cress).